Consider the following 254-residue polypeptide: MAISLKRNRFFIPYTNLVFFFFLCVSLLDKTVSIRISNQISDTVVDSPDRPLKSAVFALGSFWRSEAAFGCINGVVRTSAGYAGGTKTNPEYRNLGDHAESVQVEYDPRIIGYRQLLDVFWSSHDSRQVFGQGPDVGNQYRSCIFTNSTEELRLASTSKEREQLNTRSSIVTTQIQQLGTFYRAEPDHQKFELKQHPFLIQLIGNMVEEELERSALATKLNGYAAELCPPRIQKHIDSRVNEIIRKGWPVLRDI.

Residues 1-33 (MAISLKRNRFFIPYTNLVFFFFLCVSLLDKTVS) form the signal peptide.

Belongs to the MsrA Met sulfoxide reductase family.

It catalyses the reaction L-methionyl-[protein] + [thioredoxin]-disulfide + H2O = L-methionyl-(S)-S-oxide-[protein] + [thioredoxin]-dithiol. It carries out the reaction [thioredoxin]-disulfide + L-methionine + H2O = L-methionine (S)-S-oxide + [thioredoxin]-dithiol. Its function is as follows. Catalyzes the reduction of methionine sulfoxide (MetSO) to methionine in proteins. Plays a protective role against oxidative stress by restoring activity to proteins that have been inactivated by methionine oxidation. MSRA family specifically reduces the MetSO S-enantiomer. The sequence is that of Peptide methionine sulfoxide reductase A5 (MSRA5) from Arabidopsis thaliana (Mouse-ear cress).